Reading from the N-terminus, the 495-residue chain is Potassium voltage-gated channel subfamily A member 1 (495 aa).

A disordered region spans residues 1–30 (MTVMSGENADEASAAPGHPQDGSYPRQADH). Residues 1 to 128 (MTVMSGENAD…FYELGEEAME (128 aa)) form a tetramerization domain region. At 1 to 164 (MTVMSGENAD…LLFEYPESSG (164 aa)) the chain is on the cytoplasmic side. A Phosphoserine modification is found at serine 23. Residues 165-186 (PARVIAIVSVMVILISIVIFCL) traverse the membrane as a helical segment. Topologically, residues 187–220 (ETLPELKDDKDFTGTIHRIDNTTVIYTSNIFTDP) are extracellular. An N-linked (GlcNAc...) asparagine glycan is attached at asparagine 207. The helical transmembrane segment at 221 to 242 (FFIVETLCIIWFSFELVVRFFA) threads the bilayer. Cysteine 243 is lipidated: S-palmitoyl cysteine. The Cytoplasmic portion of the chain corresponds to 243–253 (CPSKTDFFKNI). A helical membrane pass occupies residues 254–274 (MNFIDIVAIIPYFITLGTEIA). Over 275–287 (EQEGNQKGEQATS) the chain is Extracellular. Residues 288-308 (LAILRVIRLVRVFRIFKLSRH) traverse the membrane as a helical; Voltage-sensor segment. Residues 309-323 (SKGLQILGQTLKASM) lie on the Cytoplasmic side of the membrane. The interval 310–323 (KGLQILGQTLKASM) is S4-S5 linker. A Phosphoserine; by PKA modification is found at serine 322. Residues 324-345 (RELGLLIFFLFIGVILFSSAVY) traverse the membrane as a helical segment. Residues 346 to 359 (FAEAEEAESHFSSI) lie on the Extracellular side of the membrane. Positions 360–371 (PDAFWWAVVSMT) form an intramembrane region, helical. Residues 372–377 (TVGYGD) carry the Selectivity filter motif. The stretch at 372 to 379 (TVGYGDMY) is an intramembrane region. Topologically, residues 380–386 (PVTIGGK) are extracellular. Residues 387-415 (IVGSLCAIAGVLTIALPVPVIVSNFNYFY) form a helical membrane-spanning segment. Over 416-495 (HRETEGEEQA…VNKSKLLTDV (80 aa)) the chain is Cytoplasmic. A phosphoserine mark is found at serine 437 and serine 439. A Phosphoserine; by PKA modification is found at serine 446. Residues 493–495 (TDV) carry the PDZ-binding motif.

It belongs to the potassium channel family. A (Shaker) (TC 1.A.1.2) subfamily. Kv1.1/KCNA1 sub-subfamily. As to quaternary structure, homotetramer and heterotetramer with other channel-forming alpha subunits, such as KCNA2, KCNA4, KCNA5, KCNA6 and KCNA7. Channel activity is regulated by interaction with the beta subunits KCNAB1 and KCNAB2. Identified in a complex with KCNA2 and KCNAB2. Interacts (via C-terminus) with the PDZ domains of DLG1, DLG2 and DLG4. Interacts with LGI1 within a complex containing LGI1, KCNA4 and KCNAB1. Interacts (via cytoplasmic N-terminal domain) with KCNRG; this inhibits channel activity. Interacts with ANK3; this inhibits channel activity. Interacts (via N-terminus) with STX1A; this promotes channel inactivation. Interacts (via N-terminus) with the heterodimer formed by GNB1 and GNG2; this promotes channel inactivation. Can interact simultaneously with STX1A and the heterodimer formed by GNB1 and GNG2. Interacts with ADAM11. In terms of processing, palmitoylated on Cys-243; which may be required for membrane targeting. N-glycosylated. Post-translationally, phosphorylated on tyrosine residues. Phosphorylation increases in response to NRG1; this inhibits channel activity. Phosphorylated by PKA. Phosphorylation at Ser-446 regulates channel activity by down-regulating expression at the cell membrane. Detected in hippocampus, in the middle third of the molecular layer of the dentate gyrus and in stratum radiatum and stratum oriens. Detected in the mossy fiber zone in the hippocampus CA3 region, at or near axon terminals. Detected in brain cortex, at basket cell terminals. Detected adjacent to nodes of Ranvier in juxtaparanodal zones in spinal cord nerve fibers, but also in paranodal regions in some myelinated spinal cord axons. Detected in juxtaparanodal regions adjacent to the nodes of Ranvier in myelinated axons in cerebellar white matter. Detected in sensory neurons. Detected in neurons from the medial nucleus of the trapezoid body. Detected in basolateral amygdala. Detected in the paraventricular nucleus of the hypothalamus. Detected in the islet of Langerhans (at protein level).

It is found in the cell membrane. The protein localises to the membrane. The protein resides in the cell projection. Its subcellular location is the axon. It localises to the cytoplasmic vesicle. It is found in the perikaryon. The protein localises to the endoplasmic reticulum. The protein resides in the dendrite. Its subcellular location is the cell junction. It localises to the synapse. It is found in the presynapse. The protein localises to the presynaptic cell membrane. It catalyses the reaction K(+)(in) = K(+)(out). With respect to regulation, inhibited by 4-aminopyridine (4-AP) and by tetraethylammonium (TEA). Inhibited by kaliotoxin (KTX). Voltage-gated potassium channel that mediates transmembrane potassium transport in excitable membranes, primarily in the brain and the central nervous system, but also in the kidney. Contributes to the regulation of the membrane potential and nerve signaling, and prevents neuronal hyperexcitability. Forms tetrameric potassium-selective channels through which potassium ions pass in accordance with their electrochemical gradient. The channel alternates between opened and closed conformations in response to the voltage difference across the membrane. Can form functional homotetrameric channels and heterotetrameric channels that contain variable proportions of KCNA1, KCNA2, KCNA4, KCNA5, KCNA6, KCNA7, and possibly other family members as well; channel properties depend on the type of alpha subunits that are part of the channel. Channel properties are modulated by cytoplasmic beta subunits that regulate the subcellular location of the alpha subunits and promote rapid inactivation of delayed rectifier potassium channels. In vivo, membranes probably contain a mixture of heteromeric potassium channel complexes, making it difficult to assign currents observed in intact tissues to any particular potassium channel family member. Homotetrameric KCNA1 forms a delayed-rectifier potassium channel that opens in response to membrane depolarization, followed by slow spontaneous channel closure. In contrast, a heterotetrameric channel formed by KCNA1 and KCNA4 shows rapid inactivation. Regulates neuronal excitability in hippocampus, especially in mossy fibers and medial perforant path axons, preventing neuronal hyperexcitability. Response to toxins that are selective for KCNA1, respectively for KCNA2, suggests that heteromeric potassium channels composed of both KCNA1 and KCNA2 play a role in pacemaking and regulate the output of deep cerebellar nuclear neurons. May function as down-stream effector for G protein-coupled receptors and inhibit GABAergic inputs to basolateral amygdala neurons. May contribute to the regulation of neurotransmitter release, such as gamma-aminobutyric acid (GABA) release. Plays a role in regulating the generation of action potentials and preventing hyperexcitability in myelinated axons of the vagus nerve, and thereby contributes to the regulation of heart contraction. Required for normal neuromuscular responses. Regulates the frequency of neuronal action potential firing in response to mechanical stimuli, and plays a role in the perception of pain caused by mechanical stimuli, but does not play a role in the perception of pain due to heat stimuli. Required for normal responses to auditory stimuli and precise location of sound sources, but not for sound perception. The use of toxins that block specific channels suggest that it contributes to the regulation of the axonal release of the neurotransmitter dopamine. Required for normal postnatal brain development and normal proliferation of neuronal precursor cells in the brain. Plays a role in the reabsorption of Mg(2+) in the distal convoluted tubules in the kidney and in magnesium ion homeostasis, probably via its effect on the membrane potential. This Rattus norvegicus (Rat) protein is Potassium voltage-gated channel subfamily A member 1.